The following is a 424-amino-acid chain: Multifunctional CCA protein (424 aa).

Positions 8 and 11 each coordinate ATP. Residues G8 and R11 each coordinate CTP. D21 and D23 together coordinate Mg(2+). ATP contacts are provided by R91, R149, and R152. CTP is bound by residues R91, R149, and R152. One can recognise an HD domain in the interval 238–339 (TGIHLMMVLD…VRLLERCDAF (102 aa)).

This sequence belongs to the tRNA nucleotidyltransferase/poly(A) polymerase family. Bacterial CCA-adding enzyme type 1 subfamily. Monomer. Can also form homodimers and oligomers. It depends on Mg(2+) as a cofactor. The cofactor is Ni(2+).

It catalyses the reaction a tRNA precursor + 2 CTP + ATP = a tRNA with a 3' CCA end + 3 diphosphate. The catalysed reaction is a tRNA with a 3' CCA end + 2 CTP + ATP = a tRNA with a 3' CCACCA end + 3 diphosphate. Its function is as follows. Catalyzes the addition and repair of the essential 3'-terminal CCA sequence in tRNAs without using a nucleic acid template. Adds these three nucleotides in the order of C, C, and A to the tRNA nucleotide-73, using CTP and ATP as substrates and producing inorganic pyrophosphate. tRNA 3'-terminal CCA addition is required both for tRNA processing and repair. Also involved in tRNA surveillance by mediating tandem CCA addition to generate a CCACCA at the 3' terminus of unstable tRNAs. While stable tRNAs receive only 3'-terminal CCA, unstable tRNAs are marked with CCACCA and rapidly degraded. The chain is Multifunctional CCA protein from Polaromonas naphthalenivorans (strain CJ2).